Here is a 131-residue protein sequence, read N- to C-terminus: Protein Bouncer (131 aa).

An N-terminal signal peptide occupies residues 1-26; the sequence is MGSLRTRQLFHAALLWLCLPLPLLLC. Disulfide bonds link C31/C56, C50/C74, C80/C99, and C100/C105. The 76-residue stretch at 31-106 folds into the UPAR/Ly6 domain; it reads CYYSPVLEKE…YSCCDWPYCN (76 aa). An N-linked (GlcNAc...) asparagine glycan is attached at N65. N106 is lipidated: GPI-anchor amidated asparagine. A propeptide spans 107-131 (removed in mature form); that stretch reads RAVALEPLTAMLVAAAVVACSFCLT.

Belongs to the SPACA4/bouncer family. As to quaternary structure, interacts with spermatocyte complex composed of izumo1, spaca6 and tmem81. As to expression, expressed in oocytes. Not expressed in testis.

It localises to the cell membrane. Its function is as follows. Oocyte-expressed fertilization factor that mediates sperm-egg binding and is essential for sperm entry into the egg. Necessary and sufficient to mediate species-specific gamete recognition and fertilization, which is essential for vertebrate species performing external fertilization. External fertilization cannot guarantee that only conspecific sperm reaches the egg by precopulatory mate choice: proteins such as Bouncer can therefore support the selection of conspecific sperm. The chain is Protein Bouncer from Oryzias latipes (Japanese rice fish).